The following is a 430-amino-acid chain: Enolase (430 aa).

Q165 provides a ligand contact to (2R)-2-phosphoglycerate. The active-site Proton donor is E207. D244, E287, and D314 together coordinate Mg(2+). (2R)-2-phosphoglycerate-binding residues include K339, R368, S369, and K390. K339 functions as the Proton acceptor in the catalytic mechanism.

The protein belongs to the enolase family. In terms of assembly, component of the RNA degradosome, a multiprotein complex involved in RNA processing and mRNA degradation. Mg(2+) serves as cofactor.

It is found in the cytoplasm. The protein resides in the secreted. It localises to the cell surface. The enzyme catalyses (2R)-2-phosphoglycerate = phosphoenolpyruvate + H2O. It functions in the pathway carbohydrate degradation; glycolysis; pyruvate from D-glyceraldehyde 3-phosphate: step 4/5. Its function is as follows. Catalyzes the reversible conversion of 2-phosphoglycerate (2-PG) into phosphoenolpyruvate (PEP). It is essential for the degradation of carbohydrates via glycolysis. This is Enolase from Xanthomonas campestris pv. campestris (strain 8004).